The chain runs to 673 residues: Annexin A6 (673 aa).

Ala-2 carries the post-translational modification N-acetylalanine. Ser-13 carries the post-translational modification Phosphoserine. Annexin repeat units follow at residues Phe-20–Arg-91, Pro-92–Gln-163, Asp-175–Lys-247, Ser-251–Gly-322, Phe-363–Met-434, Pro-435–Thr-506, Glu-521–Gln-595, and Asn-599–Gly-670. A Phosphotyrosine modification is found at Tyr-30. Residues Lys-63, Lys-68, Lys-75, and Lys-81 each carry the N6-acetyllysine modification. Tyr-201 bears the Phosphotyrosine mark. 3 positions are modified to N6-acetyllysine: Lys-306, Lys-370, and Lys-418. Ser-422 is subject to Phosphoserine. Lys-483 carries the N6-acetyllysine modification. Residue Ser-537 is modified to Phosphoserine. Lys-620 is modified (N6-acetyllysine).

Belongs to the annexin family. Phosphorylated in response to growth factor stimulation.

The protein resides in the cytoplasm. It localises to the melanosome. May associate with CD21. May regulate the release of Ca(2+) from intracellular stores. This Homo sapiens (Human) protein is Annexin A6 (ANXA6).